The sequence spans 340 residues: Phosphoribosylformylglycinamidine cyclo-ligase (340 aa).

This sequence belongs to the AIR synthase family.

Its subcellular location is the cytoplasm. It catalyses the reaction 2-formamido-N(1)-(5-O-phospho-beta-D-ribosyl)acetamidine + ATP = 5-amino-1-(5-phospho-beta-D-ribosyl)imidazole + ADP + phosphate + H(+). Its pathway is purine metabolism; IMP biosynthesis via de novo pathway; 5-amino-1-(5-phospho-D-ribosyl)imidazole from N(2)-formyl-N(1)-(5-phospho-D-ribosyl)glycinamide: step 2/2. The chain is Phosphoribosylformylglycinamidine cyclo-ligase from Streptococcus agalactiae serotype V (strain ATCC BAA-611 / 2603 V/R).